Here is a 448-residue protein sequence, read N- to C-terminus: Pentatricopeptide repeat-containing protein At1g80550, mitochondrial (448 aa).

The transit peptide at Met1 to Leu21 directs the protein to the mitochondrion. PPR repeat units follow at residues Thr80 to Asn110, Asn116 to Phe146, Asp150 to Val186, Asn188 to Lys222, Asp223 to Leu257, Asp258 to Pro292, Asn293 to Pro327, Thr331 to Pro359, Lys360 to Pro394, and Asp395 to Pro429.

It belongs to the PPR family. P subfamily.

Its subcellular location is the mitochondrion. In Arabidopsis thaliana (Mouse-ear cress), this protein is Pentatricopeptide repeat-containing protein At1g80550, mitochondrial.